Consider the following 673-residue polypeptide: Mechanosensitive ion channel protein 2, chloroplastic (673 aa).

The transit peptide at 1-75 (MALYGTLQLS…SVPCRTTAFR (75 aa)) directs the protein to the chloroplast. Helical transmembrane passes span 107-127 (FPFV…LWGL), 152-172 (YHVM…LFIC), 193-213 (LNFV…SSLI), 240-260 (ALYS…LGFS), and 264-284 (WLTA…EILT). Positions 492–673 (KINGEDKSKS…QPNSGASTEP (182 aa)) are disordered. Composition is skewed to basic and acidic residues over residues 510 to 525 (AEQE…KETS), 564 to 576 (TPKD…TEKP), and 617 to 642 (GSKR…ELTG). A Phosphoserine modification is found at Ser571. The segment covering 661–673 (SQSQPNSGASTEP) has biased composition (polar residues).

The protein belongs to the MscS (TC 1.A.23) family. In terms of tissue distribution, widely expressed.

It localises to the plastid. Its subcellular location is the chloroplast membrane. Its function is as follows. Mechanosensitive channel that opens in response to stretch forces in the membrane lipid bilayer. Controls plastid size, shape, and perhaps division during normal plant development by altering ion flux in response to changes in membrane tension. Acts as a component of the chloroplast division machinery. The protein is Mechanosensitive ion channel protein 2, chloroplastic (MSL2) of Arabidopsis thaliana (Mouse-ear cress).